A 236-amino-acid chain; its full sequence is Phosphoribosylaminoimidazole-succinocarboxamide synthase (236 aa).

The protein belongs to the SAICAR synthetase family.

The enzyme catalyses 5-amino-1-(5-phospho-D-ribosyl)imidazole-4-carboxylate + L-aspartate + ATP = (2S)-2-[5-amino-1-(5-phospho-beta-D-ribosyl)imidazole-4-carboxamido]succinate + ADP + phosphate + 2 H(+). It functions in the pathway purine metabolism; IMP biosynthesis via de novo pathway; 5-amino-1-(5-phospho-D-ribosyl)imidazole-4-carboxamide from 5-amino-1-(5-phospho-D-ribosyl)imidazole-4-carboxylate: step 1/2. The chain is Phosphoribosylaminoimidazole-succinocarboxamide synthase from Rickettsia africae (strain ESF-5).